The following is a 123-amino-acid chain: ATP synthase epsilon chain (123 aa).

It belongs to the ATPase epsilon chain family. In terms of assembly, F-type ATPases have 2 components, CF(1) - the catalytic core - and CF(0) - the membrane proton channel. CF(1) has five subunits: alpha(3), beta(3), gamma(1), delta(1), epsilon(1). CF(0) has three main subunits: a, b and c.

Its subcellular location is the cell inner membrane. Produces ATP from ADP in the presence of a proton gradient across the membrane. This Helicobacter pylori (strain G27) protein is ATP synthase epsilon chain.